The chain runs to 485 residues: Hexokinase-1 (485 aa).

The Hexokinase domain occupies 21–468 (KELMDEIHQL…SGAGAAVIAA (448 aa)). Positions 75–209 (TGKESGNYLA…ELPIEIVALI (135 aa)) are hexokinase small subdomain. Residues 86–91 (DLGGTN) and Lys-111 each bind ATP. Substrate-binding positions include Ser-158, 175-176 (TK), 210-211 (ND), and Asn-237. A hexokinase large subdomain region spans residues 210–457 (NDTVGTLIAS…DPITIVPAED (248 aa)). Ser-245 is subject to Phosphoserine. Glu-269 is a substrate binding site. A Phosphoserine modification is found at Ser-272. Residue Glu-302 participates in substrate binding. ATP-binding positions include 307–308 (GY), 344–348 (TSYPA), and 419–423 (SVYNK).

Belongs to the hexokinase family. Homodimer.

It catalyses the reaction a D-hexose + ATP = a D-hexose 6-phosphate + ADP + H(+). The catalysed reaction is D-fructose + ATP = D-fructose 6-phosphate + ADP + H(+). The enzyme catalyses D-glucose + ATP = D-glucose 6-phosphate + ADP + H(+). It functions in the pathway carbohydrate metabolism; hexose metabolism. Its pathway is carbohydrate degradation; glycolysis; D-glyceraldehyde 3-phosphate and glycerone phosphate from D-glucose: step 1/4. With respect to regulation, subject to allosteric control. Substrate inhibition by ATP. In terms of biological role, catalyzes the phosphorylation of hexose, such as D-glucose and D-fructose, to hexose 6-phosphate (D-glucose 6-phosphate and D-fructose 6-phosphate, respectively). Mediates the initial step of glycolysis by catalyzing phosphorylation of D-glucose to D-glucose 6-phosphate. The chain is Hexokinase-1 (HXK1) from Saccharomyces cerevisiae (strain ATCC 204508 / S288c) (Baker's yeast).